The sequence spans 360 residues: MTYKVLHIGAGGFGERWCDTFLPQNVADGTIEVVGLVDIDAKALDIGRKHLGLKAEQCFTAAAQAFQMVDADFCTIVIPPALHEGIVDLALARGMHILSEKPIADTMEASVRIAEKVRKSGLNMGVTMSHRFDQDKSTLRALVGADAIGRVNTVSCRFAGDFRLYDSWGRFRHEMMHPMLIEGAVHHLDIMADLAGAPCTSIYARTWKPEWADYKGDTDAIVLMDFANGAHGVYEGSSAQATGLNDWAFEYVRVEGESGTAILDHREIEVFHRYPMRLRQASRQGKGQQVSLLPGRKWQNALLIEQFCQWLDSGPPMATNVWENLQSVALVFSAIESVRLGQPVKVQEFLQSYRVGASIE.

Residue 4 to 22 (KVLHIGAGGFGERWCDTFL) participates in NAD(+) binding.

Functionally, could be a NAD-dependent oxidoreductase. This is an uncharacterized protein from Sinorhizobium fredii (strain NBRC 101917 / NGR234).